We begin with the raw amino-acid sequence, 346 residues long: 3 beta-hydroxysteroid dehydrogenase/Delta 5--&gt;4-isomerase (346 aa).

The active-site Proton acceptor is Tyr-147. Lys-151 is an NAD(+) binding site.

Belongs to the 3-beta-HSD family.

The enzyme catalyses a 3beta-hydroxy-Delta(5)-steroid + NAD(+) = a 3-oxo-Delta(5)-steroid + NADH + H(+). It catalyses the reaction a 3-oxo-Delta(5)-steroid = a 3-oxo-Delta(4)-steroid. Its pathway is lipid metabolism; steroid biosynthesis. Catalyzes the oxidative conversion of Delta(5)-ene-3-beta-hydroxy steroid, and the oxidative conversion of ketosteroids. The 3-beta-HSD enzymatic system plays a crucial role in the biosynthesis of all classes of hormonal steroids. During viral infection, steroid production contributes to virulence by inhibiting the host inflammatory response. This Homo sapiens (Human) protein is 3 beta-hydroxysteroid dehydrogenase/Delta 5--&gt;4-isomerase (OPG174).